Consider the following 395-residue polypeptide: Sulfate adenylyltransferase (395 aa).

The protein belongs to the sulfate adenylyltransferase family.

It carries out the reaction sulfate + ATP + H(+) = adenosine 5'-phosphosulfate + diphosphate. It participates in sulfur metabolism; hydrogen sulfide biosynthesis; sulfite from sulfate: step 1/3. The protein is Sulfate adenylyltransferase of Synechococcus elongatus (strain ATCC 33912 / PCC 7942 / FACHB-805) (Anacystis nidulans R2).